A 256-amino-acid polypeptide reads, in one-letter code: Imidazole glycerol phosphate synthase subunit HisF (256 aa).

Residues D12 and D131 contribute to the active site.

Belongs to the HisA/HisF family. Heterodimer of HisH and HisF.

It is found in the cytoplasm. It catalyses the reaction 5-[(5-phospho-1-deoxy-D-ribulos-1-ylimino)methylamino]-1-(5-phospho-beta-D-ribosyl)imidazole-4-carboxamide + L-glutamine = D-erythro-1-(imidazol-4-yl)glycerol 3-phosphate + 5-amino-1-(5-phospho-beta-D-ribosyl)imidazole-4-carboxamide + L-glutamate + H(+). The protein operates within amino-acid biosynthesis; L-histidine biosynthesis; L-histidine from 5-phospho-alpha-D-ribose 1-diphosphate: step 5/9. IGPS catalyzes the conversion of PRFAR and glutamine to IGP, AICAR and glutamate. The HisF subunit catalyzes the cyclization activity that produces IGP and AICAR from PRFAR using the ammonia provided by the HisH subunit. In Micrococcus luteus (strain ATCC 4698 / DSM 20030 / JCM 1464 / CCM 169 / CCUG 5858 / IAM 1056 / NBRC 3333 / NCIMB 9278 / NCTC 2665 / VKM Ac-2230) (Micrococcus lysodeikticus), this protein is Imidazole glycerol phosphate synthase subunit HisF.